Consider the following 1576-residue polypeptide: Pentafunctional AROM polypeptide (1576 aa).

Positions 1–387 (MGSTTFENPT…YEPKASVVED (387 aa)) are 3-dehydroquinate synthase. NAD(+) contacts are provided by residues 49–51 (DTN), 86–89 (ENSK), 117–119 (GGV), and aspartate 122. Position 133 (arginine 133) interacts with 7-phospho-2-dehydro-3-deoxy-D-arabino-heptonate. 142–143 (TT) is an NAD(+) binding site. 2 residues coordinate 7-phospho-2-dehydro-3-deoxy-D-arabino-heptonate: aspartate 149 and lysine 155. Lysine 164 lines the NAD(+) pocket. Residue asparagine 165 coordinates 7-phospho-2-dehydro-3-deoxy-D-arabino-heptonate. NAD(+) contacts are provided by residues 182–185 (FLET) and asparagine 193. Zn(2+) is bound at residue glutamate 197. Residues 197-200 (EVVK) and lysine 253 each bind 7-phospho-2-dehydro-3-deoxy-D-arabino-heptonate. Residue glutamate 263 is the Proton acceptor; for 3-dehydroquinate synthase activity of the active site. Residues 267–271 (RNILN) and histidine 274 each bind 7-phospho-2-dehydro-3-deoxy-D-arabino-heptonate. Histidine 274 is a Zn(2+) binding site. Residue histidine 278 is the Proton acceptor; for 3-dehydroquinate synthase activity of the active site. The 7-phospho-2-dehydro-3-deoxy-D-arabino-heptonate site is built by histidine 290 and lysine 359. Histidine 290 serves as a coordination point for Zn(2+). Residues 400 to 841 (VRPSVPETLN…WDILSKSFQV (442 aa)) are EPSP synthase. Residue cysteine 823 is the For EPSP synthase activity of the active site. The shikimate kinase stretch occupies residues 863–1055 (DKSIFIIGMR…RNKPQSFFVS (193 aa)). Position 870 to 877 (870 to 877 (GMRGAGKT)) interacts with ATP. The 3-dehydroquinase stretch occupies residues 1056-1276 (LTMPDISGAA…AAPGQLSAAE (221 aa)). The active-site Proton acceptor; for 3-dehydroquinate dehydratase activity is the histidine 1179. Catalysis depends on lysine 1207, which acts as the Schiff-base intermediate with substrate; for 3-dehydroquinate dehydratase activity. The interval 1289-1576 (PKSFYLFGTP…RAAVMGDSTA (288 aa)) is shikimate dehydrogenase.

This sequence in the N-terminal section; belongs to the sugar phosphate cyclases superfamily. Dehydroquinate synthase family. The protein in the 2nd section; belongs to the EPSP synthase family. In the 3rd section; belongs to the shikimate kinase family. It in the 4th section; belongs to the type-I 3-dehydroquinase family. This sequence in the C-terminal section; belongs to the shikimate dehydrogenase family. In terms of assembly, homodimer. It depends on Zn(2+) as a cofactor.

It is found in the cytoplasm. The enzyme catalyses 7-phospho-2-dehydro-3-deoxy-D-arabino-heptonate = 3-dehydroquinate + phosphate. It carries out the reaction 3-dehydroquinate = 3-dehydroshikimate + H2O. It catalyses the reaction shikimate + NADP(+) = 3-dehydroshikimate + NADPH + H(+). The catalysed reaction is shikimate + ATP = 3-phosphoshikimate + ADP + H(+). The enzyme catalyses 3-phosphoshikimate + phosphoenolpyruvate = 5-O-(1-carboxyvinyl)-3-phosphoshikimate + phosphate. It participates in metabolic intermediate biosynthesis; chorismate biosynthesis; chorismate from D-erythrose 4-phosphate and phosphoenolpyruvate: step 2/7. It functions in the pathway metabolic intermediate biosynthesis; chorismate biosynthesis; chorismate from D-erythrose 4-phosphate and phosphoenolpyruvate: step 3/7. The protein operates within metabolic intermediate biosynthesis; chorismate biosynthesis; chorismate from D-erythrose 4-phosphate and phosphoenolpyruvate: step 4/7. Its pathway is metabolic intermediate biosynthesis; chorismate biosynthesis; chorismate from D-erythrose 4-phosphate and phosphoenolpyruvate: step 5/7. It participates in metabolic intermediate biosynthesis; chorismate biosynthesis; chorismate from D-erythrose 4-phosphate and phosphoenolpyruvate: step 6/7. Its function is as follows. The AROM polypeptide catalyzes 5 consecutive enzymatic reactions in prechorismate polyaromatic amino acid biosynthesis. The chain is Pentafunctional AROM polypeptide from Sclerotinia sclerotiorum (strain ATCC 18683 / 1980 / Ss-1) (White mold).